The chain runs to 260 residues: Proteasome subunit alpha (260 aa).

The protein belongs to the peptidase T1A family. As to quaternary structure, the 20S proteasome core is composed of 14 alpha and 14 beta subunits that assemble into four stacked heptameric rings, resulting in a barrel-shaped structure. The two inner rings, each composed of seven catalytic beta subunits, are sandwiched by two outer rings, each composed of seven alpha subunits. The catalytic chamber with the active sites is on the inside of the barrel. Has a gated structure, the ends of the cylinder being occluded by the N-termini of the alpha-subunits. Is capped at one or both ends by the proteasome regulatory ATPase, PAN.

It localises to the cytoplasm. With respect to regulation, the formation of the proteasomal ATPase PAN-20S proteasome complex, via the docking of the C-termini of PAN into the intersubunit pockets in the alpha-rings, triggers opening of the gate for substrate entry. Interconversion between the open-gate and close-gate conformations leads to a dynamic regulation of the 20S proteasome proteolysis activity. Its function is as follows. Component of the proteasome core, a large protease complex with broad specificity involved in protein degradation. This Thermococcus onnurineus (strain NA1) protein is Proteasome subunit alpha.